The chain runs to 283 residues: uncharacterized protein (283 aa).

The segment covering 1–10 has biased composition (polar residues); that stretch reads MEVNKTTESL. Disordered stretches follow at residues 1–96 and 255–283; these read MEVN…SGGN and DQEG…EAQI. Composition is skewed to basic and acidic residues over residues 14–34 and 44–81; these read KVEH…RDVK and SKQE…VSSR.

This sequence belongs to the chlamydial CPn_0705/CT_671/TC_0042 family.

This is an uncharacterized protein from Chlamydia muridarum (strain MoPn / Nigg).